We begin with the raw amino-acid sequence, 245 residues long: 1-(5-phosphoribosyl)-5-[(5-phosphoribosylamino)methylideneamino] imidazole-4-carboxamide isomerase (245 aa).

D7 (proton acceptor) is an active-site residue. Catalysis depends on D129, which acts as the Proton donor.

This sequence belongs to the HisA/HisF family.

It localises to the cytoplasm. It carries out the reaction 1-(5-phospho-beta-D-ribosyl)-5-[(5-phospho-beta-D-ribosylamino)methylideneamino]imidazole-4-carboxamide = 5-[(5-phospho-1-deoxy-D-ribulos-1-ylimino)methylamino]-1-(5-phospho-beta-D-ribosyl)imidazole-4-carboxamide. The protein operates within amino-acid biosynthesis; L-histidine biosynthesis; L-histidine from 5-phospho-alpha-D-ribose 1-diphosphate: step 4/9. This Serratia proteamaculans (strain 568) protein is 1-(5-phosphoribosyl)-5-[(5-phosphoribosylamino)methylideneamino] imidazole-4-carboxamide isomerase.